A 376-amino-acid chain; its full sequence is N-acetyldiaminopimelate deacetylase (376 aa).

The active site involves Asp69. Catalysis depends on Glu128, which acts as the Proton acceptor.

It belongs to the peptidase M20A family. N-acetyldiaminopimelate deacetylase subfamily.

The enzyme catalyses N-acetyl-(2S,6S)-2,6-diaminopimelate + H2O = (2S,6S)-2,6-diaminopimelate + acetate. The protein operates within amino-acid biosynthesis; L-lysine biosynthesis via DAP pathway; LL-2,6-diaminopimelate from (S)-tetrahydrodipicolinate (acetylase route): step 3/3. Catalyzes the conversion of N-acetyl-diaminopimelate to diaminopimelate and acetate. This chain is N-acetyldiaminopimelate deacetylase, found in Bacillus cytotoxicus (strain DSM 22905 / CIP 110041 / 391-98 / NVH 391-98).